The following is a 420-amino-acid chain: Acetyl-CoA acetyltransferase B, mitochondrial (420 aa).

The transit peptide at 1–33 (MAFCGPRTAARLSHSTRALHYTHRSFASPRTLN) directs the protein to the mitochondrion. C119 functions as the Acyl-thioester intermediate in the catalytic mechanism. Residues Y212, 251-253 (RVD), and K256 each bind CoA. Y212 is a K(+) binding site. 2 residues coordinate K(+): A273 and A274. S277 lines the CoA pocket. V374 provides a ligand contact to K(+). C406 (proton donor/acceptor) is an active-site residue.

This sequence belongs to the thiolase-like superfamily. Thiolase family. In terms of assembly, homotetramer.

It localises to the mitochondrion. It carries out the reaction 2 acetyl-CoA = acetoacetyl-CoA + CoA. It catalyses the reaction propanoyl-CoA + acetyl-CoA = 2-methyl-3-oxobutanoyl-CoA + CoA. The protein operates within lipid metabolism; fatty acid beta-oxidation. In terms of biological role, this is one of the enzymes that catalyzes the last step of the mitochondrial beta-oxidation pathway, an aerobic process breaking down fatty acids into acetyl-CoA. Using free coenzyme A/CoA, catalyzes the thiolytic cleavage of medium- to long-chain 3-oxoacyl-CoAs into acetyl-CoA and a fatty acyl-CoA shortened by two carbon atoms. The activity of the enzyme is reversible and it can also catalyze the condensation of two acetyl-CoA molecules into acetoacetyl-CoA. Thereby, it plays a major role in ketone body metabolism. The polypeptide is Acetyl-CoA acetyltransferase B, mitochondrial (acat1-b) (Xenopus laevis (African clawed frog)).